The chain runs to 272 residues: Ribosomal RNA small subunit methyltransferase A (272 aa).

S-adenosyl-L-methionine-binding residues include N15, I17, G42, E64, D90, and N109.

The protein belongs to the class I-like SAM-binding methyltransferase superfamily. rRNA adenine N(6)-methyltransferase family. RsmA subfamily.

Its subcellular location is the cytoplasm. It carries out the reaction adenosine(1518)/adenosine(1519) in 16S rRNA + 4 S-adenosyl-L-methionine = N(6)-dimethyladenosine(1518)/N(6)-dimethyladenosine(1519) in 16S rRNA + 4 S-adenosyl-L-homocysteine + 4 H(+). Its function is as follows. Specifically dimethylates two adjacent adenosines (A1518 and A1519) in the loop of a conserved hairpin near the 3'-end of 16S rRNA in the 30S particle. May play a critical role in biogenesis of 30S subunits. The polypeptide is Ribosomal RNA small subunit methyltransferase A (Wolbachia sp. subsp. Drosophila simulans (strain wRi)).